Consider the following 317-residue polypeptide: tRNA dimethylallyltransferase (317 aa).

14-21 is a binding site for ATP; the sequence is GPTAVGKT. Position 16–21 (16–21) interacts with substrate; it reads TAVGKT. The tract at residues 39–42 is interaction with substrate tRNA; the sequence is DSMQ.

It belongs to the IPP transferase family. As to quaternary structure, monomer. Requires Mg(2+) as cofactor.

The enzyme catalyses adenosine(37) in tRNA + dimethylallyl diphosphate = N(6)-dimethylallyladenosine(37) in tRNA + diphosphate. In terms of biological role, catalyzes the transfer of a dimethylallyl group onto the adenine at position 37 in tRNAs that read codons beginning with uridine, leading to the formation of N6-(dimethylallyl)adenosine (i(6)A). The chain is tRNA dimethylallyltransferase from Bacillus cereus (strain AH187).